A 1358-amino-acid polypeptide reads, in one-letter code: MIPSKYKLAPPDDLHPYSESERAKHKIYPDFDPWKHTKEEDEILLNFVSKGYYSTSKVNFESISARSSLQDSLPKLSSTLSEKFSEVVRIREREINTIKGNSKDGMAASKFTDLCGPDFKLPSRLTLTDHRKELWLQELSSPYTPLHKITSFIPHGLKRRQVLEQCYIKQIPLKRAVWLIKCCYSIEWKTGIAKYANSPQEKDKFNAHLLKEWTDNFVHILEKLIFEMTQHYNDSVKLEAWKTEVSYFLKLVGNCYTLELIDKNTFHFWILQFVSKVENFEYLPLPLHILELFWSGICNTNSTKVNESESNPLYMVTKLTDILLNQYYIILHSKSMINDDKYIINDIKKNNSIKESLLASIQKLICILFKQQSLEVFLFPPTSWEKYKPCLIQITSALYRKSDEVAEIKRKLELISYRNETLKYTPPISENKVKDDLILTTFTENSGSITVVELSQVDTGLTGALDDNATDFDWTSYSDQEISTKIQIIQIILWAIHPSRHSHYEAGQLAAKLLLLKINTMDGFPEYEIEDEIWSLVFKLAKLSDKSKALPAVLEALYSLLNTLIVYGLIKVSTYIRKLISSGILYLTESNDKYIHCRLLINLKMSPLMKSQYNMVLKNVMDQDPEYYNNYNFDQIVSIVEDLKVKLPNGDAIEYSNYPMSVKISLGEWYLTYLCNGKLVNETRESLTEKYVLFAHQLNTNHLYFKWIEFIVYHQLIEDIETLEYLMEVLLRYKKLFSQYINDHVLFIKTFIFIIRRILKERDSIAYSLTSFMDFWKFIMKSYSLEIRADTDLRSEMSAVYEEEKAKKEITEGEKDSWMGLYQNIHPDSTSLDQNHTGFSELFLTNLKTFLSSKQDKQAKKKARYNLLLLMQAKNRDYSKFISIYLKRKDFKTSDLVNLLSSKLLTLDQIKNTYGLKYVLELFDIESESNCVFYEYQKRCYIELNYKSVLSEYNVVSHHEMNRFIFKIVNHSTSAKLKETASALLTKNLEANKDKAIQLFYQLVYYQNNLEFLSSEELQEFAVNNSPQKLYSYLDFTNLWLFQSFTKFYIHETFQNTNEDKVKVGDVIFSIIETTKYNVLCAKIFEDIRDHRVTDLVIELFEQDFFKKIISGEEFKAEFLQMLIEIINHLSMHKGKTNDRSGEQSHTSYELCVQVMAHFQQLSDSELSAKEIELDVFMKIFTVHQNSVFQEILRDTESSSAMIESLFALFERVNFSLRLKLMFYEVLSSLKSYCTYEAGISDEQSRTKLMHKLMCLPPFQVSSFFPEEDDTDCTRDPALSLGLDLGTASANSTSSTTPSEGTHKKRCAIWDKRLHKYTGELQRKPYYCIKNYQDTEDINNCSLNLSLFDARYERNNPR.

This sequence belongs to the Mediator complex subunit 12 family. In terms of assembly, component of the SRB8-11 complex, which itself associates with the Mediator complex.

The protein localises to the nucleus. Component of the SRB8-11 complex. The SRB8-11 complex is a regulatory module of the Mediator complex which is itself involved in regulation of basal and activated RNA polymerase II-dependent transcription. The SRB8-11 complex may be involved in the transcriptional repression of a subset of genes regulated by Mediator. It may inhibit the association of the Mediator complex with RNA polymerase II to form the holoenzyme complex. In Candida glabrata (strain ATCC 2001 / BCRC 20586 / JCM 3761 / NBRC 0622 / NRRL Y-65 / CBS 138) (Yeast), this protein is Mediator of RNA polymerase II transcription subunit 12 (SRB8).